A 178-amino-acid polypeptide reads, in one-letter code: Crossover junction endodeoxyribonuclease RuvC (178 aa).

Active-site residues include Asp7, Glu67, and Asp139. Mg(2+) is bound by residues Asp7, Glu67, and Asp139.

It belongs to the RuvC family. As to quaternary structure, homodimer which binds Holliday junction (HJ) DNA. The HJ becomes 2-fold symmetrical on binding to RuvC with unstacked arms; it has a different conformation from HJ DNA in complex with RuvA. In the full resolvosome a probable DNA-RuvA(4)-RuvB(12)-RuvC(2) complex forms which resolves the HJ. The cofactor is Mg(2+).

The protein resides in the cytoplasm. The enzyme catalyses Endonucleolytic cleavage at a junction such as a reciprocal single-stranded crossover between two homologous DNA duplexes (Holliday junction).. The RuvA-RuvB-RuvC complex processes Holliday junction (HJ) DNA during genetic recombination and DNA repair. Endonuclease that resolves HJ intermediates. Cleaves cruciform DNA by making single-stranded nicks across the HJ at symmetrical positions within the homologous arms, yielding a 5'-phosphate and a 3'-hydroxyl group; requires a central core of homology in the junction. The consensus cleavage sequence is 5'-(A/T)TT(C/G)-3'. Cleavage occurs on the 3'-side of the TT dinucleotide at the point of strand exchange. HJ branch migration catalyzed by RuvA-RuvB allows RuvC to scan DNA until it finds its consensus sequence, where it cleaves and resolves the cruciform DNA. The sequence is that of Crossover junction endodeoxyribonuclease RuvC from Trichlorobacter lovleyi (strain ATCC BAA-1151 / DSM 17278 / SZ) (Geobacter lovleyi).